The sequence spans 241 residues: Small ribosomal subunit protein uS2 (241 aa).

The protein belongs to the universal ribosomal protein uS2 family.

The chain is Small ribosomal subunit protein uS2 from Photorhabdus laumondii subsp. laumondii (strain DSM 15139 / CIP 105565 / TT01) (Photorhabdus luminescens subsp. laumondii).